A 197-amino-acid chain; its full sequence is Rac-like GTP-binding protein 6 (197 aa).

13–20 provides a ligand contact to GTP; it reads GDGAVGKT. The Effector region motif lies at 35 to 43; that stretch reads YVPTVFDNF. Residues 60–64 and 118–121 each bind GTP; these read DTAGQ and TKLD. The residue at position 194 (cysteine 194) is a Cysteine methyl ester. A lipid anchor (S-geranylgeranyl cysteine) is attached at cysteine 194. Positions 195-197 are cleaved as a propeptide — removed in mature form; it reads SIL.

Belongs to the small GTPase superfamily. Rho family.

The protein resides in the cytoplasm. The protein localises to the membrane. Inactive GDP-bound Rho GTPases reside in the cytosol, are found in a complex with Rho GDP-dissociation inhibitors (Rho GDIs), and are released from the GDI protein in order to translocate to membranes upon activation. The sequence is that of Rac-like GTP-binding protein 6 (RAC6) from Oryza sativa subsp. japonica (Rice).